Consider the following 497-residue polypeptide: Acetyl-coenzyme A carboxylase carboxyl transferase subunit beta, chloroplastic (497 aa).

The CoA carboxyltransferase N-terminal domain maps to 225–497 (LWVQCENCYG…LHGFLPLNQD (273 aa)). Cys229, Cys232, Cys248, and Cys251 together coordinate Zn(2+). Residues 229-251 (CENCYGLNYKKFFSSKMNICEYC) form a C4-type zinc finger.

This sequence belongs to the AccD/PCCB family. In terms of assembly, acetyl-CoA carboxylase is a heterohexamer composed of biotin carboxyl carrier protein, biotin carboxylase and 2 subunits each of ACCase subunit alpha and ACCase plastid-coded subunit beta (accD). Zn(2+) is required as a cofactor.

Its subcellular location is the plastid. It localises to the chloroplast stroma. The enzyme catalyses N(6)-carboxybiotinyl-L-lysyl-[protein] + acetyl-CoA = N(6)-biotinyl-L-lysyl-[protein] + malonyl-CoA. Its pathway is lipid metabolism; malonyl-CoA biosynthesis; malonyl-CoA from acetyl-CoA: step 1/1. Component of the acetyl coenzyme A carboxylase (ACC) complex. Biotin carboxylase (BC) catalyzes the carboxylation of biotin on its carrier protein (BCCP) and then the CO(2) group is transferred by the transcarboxylase to acetyl-CoA to form malonyl-CoA. The sequence is that of Acetyl-coenzyme A carboxylase carboxyl transferase subunit beta, chloroplastic from Phalaenopsis aphrodite subsp. formosana (Moth orchid).